A 265-amino-acid polypeptide reads, in one-letter code: MRLLIANDDGVFAPGIRTLADTLAIAGHEVVVVCPDRERSATGHSLTVFDPIRAEVVSDRFHPRIKAWACSGTPSDCVKLALGALLEQPPDFVVSGINQGSNLGTDILYSGTVSAAMEGVIEGIPSIAISLASFTVHDFQPAADFTNRLLKALENAPLPPKVLLNVNVPALPASEIAGVVITRQGIRRYHDLFQKRVDPRGKTYYWLAGEVVEEYPQDPNQAPTDVEAIAQNLISITPLTFDLTYGQGVQDLTEWLRTVQPLFNL.

Positions 8, 9, 40, and 98 each coordinate a divalent metal cation.

Belongs to the SurE nucleotidase family. The cofactor is a divalent metal cation.

It is found in the cytoplasm. It catalyses the reaction a ribonucleoside 5'-phosphate + H2O = a ribonucleoside + phosphate. In terms of biological role, nucleotidase that shows phosphatase activity on nucleoside 5'-monophosphates. The polypeptide is 5'-nucleotidase SurE (Thermosynechococcus vestitus (strain NIES-2133 / IAM M-273 / BP-1)).